A 361-amino-acid chain; its full sequence is Aromatic amino acid aminotransferase (361 aa).

Lysine 221 is modified (N6-(pyridoxal phosphate)lysine).

This sequence belongs to the class-II pyridoxal-phosphate-dependent aminotransferase family. As to quaternary structure, homodimer. It depends on pyridoxal 5'-phosphate as a cofactor.

The catalysed reaction is an aromatic L-alpha-amino acid + 2-oxoglutarate = an aromatic oxo-acid + L-glutamate. Its function is as follows. Aminotransferase that catalyzes the conversion of aromatic amino acids and 2-oxoglutarate into corresponding aromatic oxo acids and L-glutamate. This chain is Aromatic amino acid aminotransferase, found in Mycobacterium ulcerans (strain Agy99).